The sequence spans 194 residues: Fibroblast growth factor 7 (194 aa).

The signal sequence occupies residues 1-31; sequence MRKWILTWILPSLLYRSCFHIICLVGTISLA. N-linked (GlcNAc...) asparagine glycosylation occurs at N45.

This sequence belongs to the heparin-binding growth factors family. In terms of assembly, interacts with FGFBP1. Interacts with FGFR2. Affinity between fibroblast growth factors (FGFs) and their receptors is increased by heparan sulfate glycosaminoglycans that function as coreceptors.

Plays an important role in the regulation of embryonic development, cell proliferation and cell differentiation. Required for normal branching morphogenesis. Growth factor active on keratinocytes. Possible major paracrine effector of normal epithelial cell proliferation. The protein is Fibroblast growth factor 7 (FGF7) of Ovis aries (Sheep).